The following is an 887-amino-acid chain: Pyruvate dehydrogenase E1 component (887 aa).

Homodimer. Part of the PDH complex, consisting of multiple copies of pyruvate dehydrogenase (E1), dihydrolipoamide acetyltransferase (E2) and lipoamide dehydrogenase (E3). It depends on thiamine diphosphate as a cofactor.

It carries out the reaction N(6)-[(R)-lipoyl]-L-lysyl-[protein] + pyruvate + H(+) = N(6)-[(R)-S(8)-acetyldihydrolipoyl]-L-lysyl-[protein] + CO2. Functionally, component of the pyruvate dehydrogenase (PDH) complex, that catalyzes the overall conversion of pyruvate to acetyl-CoA and CO(2). The polypeptide is Pyruvate dehydrogenase E1 component (aceE) (Buchnera aphidicola subsp. Baizongia pistaciae (strain Bp)).